A 242-amino-acid polypeptide reads, in one-letter code: Phosphomannomutase 2 (242 aa).

Residue D8 is the Nucleophile of the active site. Residues D8 and D10 each coordinate Mg(2+). D10 serves as the catalytic Proton donor/acceptor. Residues R17, R119, R130, and R137 each contribute to the alpha-D-mannose 1-phosphate site. K145 is subject to N6-acetyllysine. Alpha-D-mannose 1-phosphate contacts are provided by S175 and D177. Positions 205, 217, 219, and 222 each coordinate Mg(2+).

It belongs to the eukaryotic PMM family. Homodimer.

The protein localises to the cytoplasm. The enzyme catalyses alpha-D-mannose 1-phosphate = D-mannose 6-phosphate. It participates in nucleotide-sugar biosynthesis; GDP-alpha-D-mannose biosynthesis; alpha-D-mannose 1-phosphate from D-fructose 6-phosphate: step 2/2. Its function is as follows. Involved in the synthesis of the GDP-mannose and dolichol-phosphate-mannose required for a number of critical mannosyl transfer reactions. This chain is Phosphomannomutase 2 (Pmm2), found in Mus musculus (Mouse).